Here is a 196-residue protein sequence, read N- to C-terminus: Pyridoxal 5'-phosphate synthase subunit PdxT (196 aa).

An L-glutamine-binding site is contributed by 47 to 49 (GES). The active-site Nucleophile is the C79. L-glutamine is bound by residues R106 and 134-135 (IR). Active-site charge relay system residues include H170 and E172.

The protein belongs to the glutaminase PdxT/SNO family. In terms of assembly, in the presence of PdxS, forms a dodecamer of heterodimers. Only shows activity in the heterodimer.

It carries out the reaction aldehydo-D-ribose 5-phosphate + D-glyceraldehyde 3-phosphate + L-glutamine = pyridoxal 5'-phosphate + L-glutamate + phosphate + 3 H2O + H(+). It catalyses the reaction L-glutamine + H2O = L-glutamate + NH4(+). It functions in the pathway cofactor biosynthesis; pyridoxal 5'-phosphate biosynthesis. Functionally, catalyzes the hydrolysis of glutamine to glutamate and ammonia as part of the biosynthesis of pyridoxal 5'-phosphate. The resulting ammonia molecule is channeled to the active site of PdxS. In Bacillus cereus (strain B4264), this protein is Pyridoxal 5'-phosphate synthase subunit PdxT.